Consider the following 201-residue polypeptide: Glycine-rich protein 23 (201 aa).

The first 24 residues, 1 to 24 (MGLISGKVCVFIFVFALVAEFSFG), serve as a signal peptide directing secretion. 21 repeat units span residues 62-67 (GLGGGG), 68-73 (GLGGGG), 74-79 (GLGGGG), 80-85 (GLGGGG), 86-91 (GLGGGG), 92-97 (GLGGGG), 98-103 (GLGGGS), 104-109 (GLGGGG), 110-115 (GLGGGS), 116-121 (GLGGGG), 122-129 (GLGGGGGG), 130-135 (GLGGGG), 136-143 (GLGGGAGG), 144-151 (GYGGGAGG), 152-157 (GLGGGG), 158-163 (GIGGGG), 164-169 (GFGGGG), 170-175 (GGGFGG), 176-182 (GAGGGFG), 184-189 (GIGGGG), and 190-194 (GLGGG). The interval 62 to 194 (GLGGGGGLGG…IGGGGGLGGG (133 aa)) is 21 X 6 AA approximate tandem repeats of G-L-G-G-G-G, Gly-rich.

The sequence is that of Glycine-rich protein 23 from Arabidopsis thaliana (Mouse-ear cress).